A 335-amino-acid chain; its full sequence is MATIIYDDETTFDALKDRTIAVMGYGSQGHAHARNLHESGLNVIVGLRQGSSSWAKAESDGLKVMTVDDASRAADVIMILLPDEKQAAVYYSQIEPNLKAGDALVFAHGFNIHYNQIVPPKDVDVFMVAPKGPGHIVRRTYTEGIGVPGLIAVYQDATGKARDLALSYAKGIGATRAGVYETTFREETETDLFGEQVDLCGGLSALIKTAFEVLVEAGYQPEMAYFETCHEVKLIVDLIYEGGLERMWHSVSNTAEYGGMTVGPRVINEYSREAMYEALERIQNGEFAKEFVLEGMVNHPVLKAMERQEKEHQLEVVGKQIRANIPWLNKKIDDD.

Residues Met-1 to Thr-182 form the KARI N-terminal Rossmann domain. Residues Tyr-25 to Gln-28, Arg-48, Ser-51, Ser-53, and Asp-83 to Gln-86 each bind NADP(+). The active site involves His-108. Gly-134 is a binding site for NADP(+). Residues Thr-183–Leu-328 enclose the KARI C-terminal knotted domain. 4 residues coordinate Mg(2+): Asp-191, Glu-195, Glu-227, and Glu-231. Residue Ser-252 coordinates substrate.

It belongs to the ketol-acid reductoisomerase family. Requires Mg(2+) as cofactor.

It catalyses the reaction (2R)-2,3-dihydroxy-3-methylbutanoate + NADP(+) = (2S)-2-acetolactate + NADPH + H(+). The enzyme catalyses (2R,3R)-2,3-dihydroxy-3-methylpentanoate + NADP(+) = (S)-2-ethyl-2-hydroxy-3-oxobutanoate + NADPH + H(+). Its pathway is amino-acid biosynthesis; L-isoleucine biosynthesis; L-isoleucine from 2-oxobutanoate: step 2/4. The protein operates within amino-acid biosynthesis; L-valine biosynthesis; L-valine from pyruvate: step 2/4. In terms of biological role, involved in the biosynthesis of branched-chain amino acids (BCAA). Catalyzes an alkyl-migration followed by a ketol-acid reduction of (S)-2-acetolactate (S2AL) to yield (R)-2,3-dihydroxy-isovalerate. In the isomerase reaction, S2AL is rearranged via a Mg-dependent methyl migration to produce 3-hydroxy-3-methyl-2-ketobutyrate (HMKB). In the reductase reaction, this 2-ketoacid undergoes a metal-dependent reduction by NADPH to yield (R)-2,3-dihydroxy-isovalerate. This chain is Ketol-acid reductoisomerase (NADP(+)), found in Methanosarcina mazei (strain ATCC BAA-159 / DSM 3647 / Goe1 / Go1 / JCM 11833 / OCM 88) (Methanosarcina frisia).